Here is a 469-residue protein sequence, read N- to C-terminus: Alpha-2C adrenergic receptor (469 aa).

Residues 1-29 form a disordered region; that stretch reads MDLQLTTNSTDSGDRGGSSNESLQRQPPS. The Extracellular segment spans residues 1-36; it reads MDLQLTTNSTDSGDRGGSSNESLQRQPPSQYSPAEV. Asn8 and Asn20 each carry an N-linked (GlcNAc...) asparagine glycan. Residues 37–62 form a helical membrane-spanning segment; it reads AGLAAVVSFLIVFTIVGNVLVVIAVL. The Cytoplasmic segment spans residues 63 to 73; sequence TSRALKAPQNL. A helical membrane pass occupies residues 74-99; it reads FQVSLASADILVATLVMPFSLANELM. The Extracellular portion of the chain corresponds to 100-109; sequence NYWYFGKVWC. A disulfide bridge connects residues Cys109 and Cys187. Residues 110-132 form a helical membrane-spanning segment; sequence VIYLALDVLFCTSSIVHLCAISL. Topologically, residues 133–154 are cytoplasmic; the sequence is DRYWSVTQAVEYNLKRTPRRIK. Residues 155-175 traverse the membrane as a helical segment; sequence GIIVTVWLISAVISFPPLISL. Over 176-194 the chain is Extracellular; that stretch reads YRDPEDDLYPQCELNDETW. The helical transmembrane segment at 195–216 threads the bilayer; that stretch reads YILSSCIGSFFAPCIIMVLVYV. Residues 217–386 are Cytoplasmic-facing; sequence RIYRVAKLRT…RKVTQAREKR (170 aa). Disordered stretches follow at residues 232–261 and 279–353; these read KRTVPEGSSQTENGLSRPPVGAGPSTAAAA and HHHH…SRLS. A compositionally biased stretch (basic residues) spans 279–296; that stretch reads HHHHHLHHHHHHHHHQLR. Acidic residues predominate over residues 301–310; the sequence is LEDIELEESS. Positions 331-353 are enriched in low complexity; it reads RGFSFSFSSTKGGQSAGAGSRLS. A helical transmembrane segment spans residues 387–407; it reads FTFVLAVVMGVFVVCWFPFFF. The Extracellular portion of the chain corresponds to 408 to 427; sequence TYSLYGICREACQVPETLFK. The chain crosses the membrane as a helical span at residues 428 to 448; that stretch reads FFFWIGYCNSSLNPVIYTIFN. At 449 to 469 the chain is on the cytoplasmic side; that stretch reads QDFRRSFKHILFKKKKKTSLQ.

Belongs to the G-protein coupled receptor 1 family. Adrenergic receptor subfamily. ADRA2C sub-subfamily.

The protein localises to the cell membrane. Its function is as follows. Alpha-2 adrenergic receptors mediate the catecholamine-induced inhibition of adenylate cyclase through the action of G proteins. This Didelphis virginiana (North American opossum) protein is Alpha-2C adrenergic receptor (ADRA2C).